The sequence spans 271 residues: Acyl-[acyl-carrier-protein]--UDP-N-acetylglucosamine O-acyltransferase (271 aa).

Belongs to the transferase hexapeptide repeat family. LpxA subfamily. Homotrimer.

It is found in the cytoplasm. It catalyses the reaction a (3R)-hydroxyacyl-[ACP] + UDP-N-acetyl-alpha-D-glucosamine = a UDP-3-O-[(3R)-3-hydroxyacyl]-N-acetyl-alpha-D-glucosamine + holo-[ACP]. It functions in the pathway glycolipid biosynthesis; lipid IV(A) biosynthesis; lipid IV(A) from (3R)-3-hydroxytetradecanoyl-[acyl-carrier-protein] and UDP-N-acetyl-alpha-D-glucosamine: step 1/6. In terms of biological role, involved in the biosynthesis of lipid A, a phosphorylated glycolipid that anchors the lipopolysaccharide to the outer membrane of the cell. In Sulfurihydrogenibium sp. (strain YO3AOP1), this protein is Acyl-[acyl-carrier-protein]--UDP-N-acetylglucosamine O-acyltransferase.